A 362-amino-acid polypeptide reads, in one-letter code: Homeobox protein extradenticle (362 aa).

Positions 34–225 (PRKQDIGEIL…VMILRSRFLD (192 aa)) constitute a PBC domain. The interval 41–120 (EILQQIMNIT…EGVAGPEKGG (80 aa)) is PBC-A. A PBC-B region spans residues 123–225 (DFLSQSDLTG…VMILRSRFLD (103 aa)). Positions 226-288 (ARRKRRNFSK…NKRIRYKKNI (63 aa)) form a DNA-binding region, homeobox; TALE-type. Positions 305–362 (GASPYSMGGPPSGAATPMMSPAPAQDSMGYSLGSGGYDQQQPYDGSMGYDQLHQDLSP) are disordered.

Belongs to the TALE/PBX homeobox family.

The protein resides in the nucleus. Functionally, transcription factor which acts with the selector homeodomain proteins altering the regulation of downstream target genes such as wingless (wg), teashirt (tsh) and decapentaplegic (dpp), thus affecting segmental identity. This Anopheles gambiae (African malaria mosquito) protein is Homeobox protein extradenticle.